Here is a 394-residue protein sequence, read N- to C-terminus: S-adenosylmethionine synthase 2 (394 aa).

E11 contributes to the Mg(2+) binding site. H17 contacts ATP. E45 is a K(+) binding site. Positions 58 and 101 each coordinate L-methionine. ATP is bound by residues 169–171, 237–240, D248, 254–255, A271, K275, and K279; these read DGK, SGRF, and RK. An L-methionine-binding site is contributed by D248. K279 contacts L-methionine.

It belongs to the AdoMet synthase family. In terms of assembly, homotetramer. Mn(2+) serves as cofactor. Requires Mg(2+) as cofactor. The cofactor is Co(2+). K(+) is required as a cofactor.

The protein resides in the cytoplasm. It catalyses the reaction L-methionine + ATP + H2O = S-adenosyl-L-methionine + phosphate + diphosphate. It functions in the pathway amino-acid biosynthesis; S-adenosyl-L-methionine biosynthesis; S-adenosyl-L-methionine from L-methionine: step 1/1. Functionally, catalyzes the formation of S-adenosylmethionine from methionine and ATP. The reaction comprises two steps that are both catalyzed by the same enzyme: formation of S-adenosylmethionine (AdoMet) and triphosphate, and subsequent hydrolysis of the triphosphate. In Oryza sativa subsp. japonica (Rice), this protein is S-adenosylmethionine synthase 2 (SAM2).